We begin with the raw amino-acid sequence, 105 residues long: Putative membrane protein insertion efficiency factor (105 aa).

It belongs to the UPF0161 family.

The protein resides in the cell membrane. Its function is as follows. Could be involved in insertion of integral membrane proteins into the membrane. The chain is Putative membrane protein insertion efficiency factor from Bifidobacterium longum subsp. infantis (strain ATCC 15697 / DSM 20088 / JCM 1222 / NCTC 11817 / S12).